Reading from the N-terminus, the 78-residue chain is Consomatin Te1 (78 aa).

Residues 1–22 form the signal peptide; sequence MQTAYWMMVMMMVWITAPLSEG. A propeptide spanning residues 23–56 is cleaved from the precursor; sequence GQLNDVIRGLVPDNLAPQLVLQSLDSRRHPHGIR. A disulfide bridge links cysteine 63 with cysteine 68. Tryptophan 65 carries the D-tryptophan modification. Residues proline 69, proline 70, and proline 72 each carry the 4-hydroxyproline modification. Residues 74–78 constitute a propeptide that is removed on maturation; that stretch reads RRLGS.

The protein belongs to the conotoxin C superfamily. Consomatin family. Expressed by the venom duct.

The protein localises to the secreted. Its function is as follows. Moderately activates human somatostatin receptors (SSTR) with a preferential activation of SSTR1 and SSTR4. In vivo, does not cause behavioral changes in mice within a few minutes of intracranial injection, but causes a progressive loss of movement thereafter. Four to five hours after injection, mice recover, even with the highest dose tested. Shows antinociception and antihyperalgesia activities in two mouse models of acute pain, most probably by acting outside the central nervous system. The polypeptide is Consomatin Te1 (Conus terebra (Sea snail)).